The following is a 162-amino-acid chain: Disulfide bond formation protein B (162 aa).

Topologically, residues methionine 1 to isoleucine 4 are cytoplasmic. The chain crosses the membrane as a helical span at residues phenylalanine 5 to tyrosine 21. Residues leucine 22–isoleucine 39 lie on the Periplasmic side of the membrane. Cysteines 31 and 34 form a disulfide. Residues alanine 40 to proline 56 form a helical membrane-spanning segment. Topologically, residues glutamine 57–histidine 62 are cytoplasmic. A helical transmembrane segment spans residues isoleucine 63–glycine 80. Over arginine 81–aspartate 136 the chain is Periplasmic. A disulfide bridge connects residues cysteine 94 and cysteine 122. A helical transmembrane segment spans residues tryptophan 137–lysine 155. Residues lysine 156–glutamine 162 are Cytoplasmic-facing.

Belongs to the DsbB family.

Its subcellular location is the cell inner membrane. In terms of biological role, required for disulfide bond formation in some periplasmic proteins. Acts by oxidizing the DsbA protein. The protein is Disulfide bond formation protein B of Nitrosomonas eutropha (strain DSM 101675 / C91 / Nm57).